Here is a 297-residue protein sequence, read N- to C-terminus: Taste receptor type 2 member 4 (297 aa).

The Extracellular portion of the chain corresponds to 1–11 (MLWELYVFVFA). Residues 12–32 (ASVFLNFVGIIANLFIIVIII) form a helical membrane-spanning segment. Over 33 to 46 (KTWVNSRRIASPDR) the chain is Cytoplasmic. A helical transmembrane segment spans residues 47–67 (ILFSLAITRFLTLGLFLLNSV). Residues 68–80 (YIATNTGRSVYFS) lie on the Extracellular side of the membrane. The helical transmembrane segment at 81-101 (TFFLLCWKFLDANSLWLVTIL) threads the bilayer. The Cytoplasmic segment spans residues 102–128 (NSLYCVKITNFQHPVFLLLKRTISMKT). A helical transmembrane segment spans residues 129–149 (TSLLLACLLISALTTLLYYML). Residues 150 to 171 (SQISRFPEHIIGRNDTSFDLSD) lie on the Extracellular side of the membrane. Asn163 carries N-linked (GlcNAc...) asparagine glycosylation. The chain crosses the membrane as a helical span at residues 172 to 192 (GILTLVASLVLNSLLQFMLNV). Residues 193 to 229 (TFASLLIHSLRRHIQKMQRNRTSFWNPQTEAHMGAMR) are Cytoplasmic-facing. The helical transmembrane segment at 230–250 (LMICFLVLYIPYSIATLLYLP) threads the bilayer. Over 251–260 (SYMRKNLRAQ) the chain is Extracellular. Residues 261–281 (AICMIITAAYPPGHSVLLIIT) traverse the membrane as a helical segment. The Cytoplasmic portion of the chain corresponds to 282–297 (HHKLKAKAKKIFCFYK).

Belongs to the G-protein coupled receptor T2R family. In terms of tissue distribution, expressed in subsets of taste receptor cells of the tongue and palate epithelium and exclusively in gustducin-positive cells. Expressed in 15% taste bud cells in circumvallate and foliate papillae but only in 2% in fungiform papillae.

It localises to the membrane. The protein resides in the cell projection. The protein localises to the cilium membrane. In terms of biological role, gustducin-coupled receptor for denatonium and N(6)-propyl-2-thiouracil implicated in the perception of bitter compounds in the oral cavity and the gastrointestinal tract. Signals through PLCB2 and the calcium-regulated cation channel TRPM5. In airway epithelial cells, binding of denatonium increases the intracellular calcium ion concentration and stimulates ciliary beat frequency. The sequence is that of Taste receptor type 2 member 4 (Tas2r4) from Mus musculus (Mouse).